A 319-amino-acid chain; its full sequence is Ribosomal RNA large subunit methyltransferase F (319 aa).

Belongs to the methyltransferase superfamily. METTL16/RlmF family.

The protein localises to the cytoplasm. The catalysed reaction is adenosine(1618) in 23S rRNA + S-adenosyl-L-methionine = N(6)-methyladenosine(1618) in 23S rRNA + S-adenosyl-L-homocysteine + H(+). Its function is as follows. Specifically methylates the adenine in position 1618 of 23S rRNA. The protein is Ribosomal RNA large subunit methyltransferase F of Aliivibrio fischeri (strain ATCC 700601 / ES114) (Vibrio fischeri).